Here is a 148-residue protein sequence, read N- to C-terminus: Urease accessory protein UreE (148 aa).

It belongs to the UreE family.

It localises to the cytoplasm. In terms of biological role, involved in urease metallocenter assembly. Binds nickel. Probably functions as a nickel donor during metallocenter assembly. The polypeptide is Urease accessory protein UreE (Bacillus sp. (strain TB-90)).